A 110-amino-acid chain; its full sequence is MSAIEVTADAASTWDWPLQHNDGVVKVHNTKEKFEVGLDVQFFTPKEIEVKVSGQELLIHCRHETRSDNHGTVAREINRAYKLPDDVDVSTVKSHLATRGVLTITASKKA.

A sHSP domain is found at 15–110 (DWPLQHNDGV…VLTITASKKA (96 aa)).

Belongs to the small heat shock protein (HSP20) family.

This is Heat shock protein Hsp-12.2 (hsp-12.2) from Caenorhabditis elegans.